We begin with the raw amino-acid sequence, 256 residues long: Pimeloyl-[acyl-carrier protein] methyl ester esterase (256 aa).

An AB hydrolase-1 domain is found at 15–242; it reads HLVLLHGWGL…AAHAPFISHP (228 aa). Residues tryptophan 22, 82–83, and 143–147 each bind substrate; these read SL and FLALQ. Serine 82 functions as the Nucleophile in the catalytic mechanism. Catalysis depends on residues aspartate 207 and histidine 235. Histidine 235 contacts substrate.

The protein belongs to the AB hydrolase superfamily. Carboxylesterase BioH family. As to quaternary structure, monomer.

It is found in the cytoplasm. It carries out the reaction 6-carboxyhexanoyl-[ACP] methyl ester + H2O = 6-carboxyhexanoyl-[ACP] + methanol + H(+). The protein operates within cofactor biosynthesis; biotin biosynthesis. In terms of biological role, the physiological role of BioH is to remove the methyl group introduced by BioC when the pimeloyl moiety is complete. It allows to synthesize pimeloyl-ACP via the fatty acid synthetic pathway through the hydrolysis of the ester bonds of pimeloyl-ACP esters. This is Pimeloyl-[acyl-carrier protein] methyl ester esterase from Shigella dysenteriae serotype 1 (strain Sd197).